The sequence spans 52 residues: Eukaryotic translation initiation factor 2 subunit 1 (52 aa).

An S1 motif domain is found at 16-52 (EDVVMVNVRSIAEMGAYVSLLEYNNIEGRILLSELSR). Ser-48 is modified (phosphoserine; by HRI). Ser-51 carries the phosphoserine modification.

Belongs to the eIF-2-alpha family. In terms of assembly, eukaryotic translation initiation factor 2 eIF2 is a heterotrimeric complex composed of an alpha (EIF2S1), a beta (EIF2S2) and a gamma (EIF2S3) chain. eIF2 is member of the 43S pre-initiation complex (43S PIC). eIF2 forms a complex with at least CELF1/CUGBP1, CALR, CALR3, EIF2S1, EIF2S2, HSP90B1 and HSPA5. Interaction with METAP2 protects EIF2S1 from inhibitory phosphorylation. Interacts with ABCF1. Associates with ribosomes. Interacts with DDX3X in an RNA-independent manner. Phosphorylation at Ser-48 and Ser-51 stabilizes the eIF-2/GDP/eIF2B complex and prevents GDP/GTP exchange reaction, thus impairing the recycling of eIF-2 between successive rounds of initiation and leading to global inhibition of translation, while concomitantly initiating the preferential translation of integrated stress response (ISR)-specific mRNAs. Substrate for at least 4 kinases: EIF2AK1/HRI, EIF2AK2/PKR, EIF2AK3/PERK and EIF2AK4/GCN2. Phosphorylation on Ser-51 by the EIF2AK4/GCN2 protein kinase occurs in response to amino acid starvation and UV irradiation. Phosphorylation at Ser-51 by the EIF2AK3/PERK protein kinase occurs in response to the unfolded protein response. Phosphorylation at Ser-51 by EIF2AK1/HRI in response to mitochondrial damage promotes relocalization to the mitochondrial surface.

Its subcellular location is the cytoplasm. It localises to the stress granule. The protein resides in the cytosol. It is found in the mitochondrion. Its activity is regulated as follows. Activity is regulated by phosphorylation at Ser-49 and Ser-52, which stabilizes the eIF2/GDP/eIF2B complex and prevents the eIF2B-mediated exchange of GDP for GTP, thereby preventing the formation of the 43S pre-initiation complex (43S PIC). This results in the global attenuation of 5' cap-dependent protein synthesis and concomitant translation of ISR-specific mRNAs that contain a short upstream open reading frame (uORF) in their 5' UTR, such as ATF4, ATF5, DDIT3/CHOP and PPP1R15A/GADD34. Its function is as follows. Member of the eIF2 complex that functions in the early steps of protein synthesis by forming a ternary complex with GTP and initiator tRNA. This complex binds to a 40S ribosomal subunit, followed by mRNA binding to form a 43S pre-initiation complex. Junction of the 60S ribosomal subunit to form the 80S initiation complex is preceded by hydrolysis of the GTP bound to eIF2 and release of an eIF2-GDP binary complex. In order for eIF2 to recycle and catalyze another round of initiation, the GDP bound to eIF2 must exchange with GTP by way of a reaction catalyzed by eIF2B. EIF2S1/eIF2-alpha is a key component of the integrated stress response (ISR), required for adaptation to various stress: phosphorylation by metabolic-stress sensing protein kinases (EIF2AK1/HRI, EIF2AK2/PKR, EIF2AK3/PERK and EIF2AK4/GCN2) in response to stress converts EIF2S1/eIF2-alpha in a global protein synthesis inhibitor, leading to a attenuation of cap-dependent translation, while concomitantly initiating the preferential translation of ISR-specific mRNAs, such as the transcriptional activators ATF4 and QRICH1, and hence allowing ATF4- and QRICH1-mediated reprogramming. EIF2S1/eIF2-alpha also acts as an activator of mitophagy in response to mitochondrial damage: phosphorylation by EIF2AK1/HRI promotes relocalization to the mitochondrial surface, thereby triggering PRKN-independent mitophagy. This chain is Eukaryotic translation initiation factor 2 subunit 1 (EIF2S1), found in Oryctolagus cuniculus (Rabbit).